A 172-amino-acid polypeptide reads, in one-letter code: uncharacterized protein (172 aa).

A signal peptide spans 1 to 22; it reads MKLFQLLLLVLTISSFIISNNG. The Extracellular segment spans residues 23 to 140; it reads LVESHQGRMH…FSYENSSNET (118 aa). A disordered region spans residues 27 to 69; sequence HQGRMHRGSGERHHRAGGNQQQPQPPSEQQVESSYNSNDDGSS. A compositionally biased stretch (basic residues) spans 29–42; the sequence is GRMHRGSGERHHRA. Low complexity predominate over residues 53-69; the sequence is SEQQVESSYNSNDDGSS. N-linked (GlcNAc...) asparagine glycosylation is found at N135 and N138. Residues 141 to 161 form a helical membrane-spanning segment; the sequence is IVIYINPVTLVFTLVLLLTFI. Residues 162–172 lie on the Cytoplasmic side of the membrane; the sequence is VLTITQSLRKY.

The protein localises to the membrane. This is an uncharacterized protein from Dictyostelium discoideum (Social amoeba).